Here is a 337-residue protein sequence, read N- to C-terminus: 4-hydroxythreonine-4-phosphate dehydrogenase (337 aa).

The substrate site is built by His-139 and Thr-140. A divalent metal cation-binding residues include His-173, His-218, and His-273. Residues Lys-281, Asn-290, and Arg-299 each coordinate substrate.

This sequence belongs to the PdxA family. In terms of assembly, homodimer. The cofactor is Zn(2+). It depends on Mg(2+) as a cofactor. Requires Co(2+) as cofactor.

Its subcellular location is the cytoplasm. It carries out the reaction 4-(phosphooxy)-L-threonine + NAD(+) = 3-amino-2-oxopropyl phosphate + CO2 + NADH. It functions in the pathway cofactor biosynthesis; pyridoxine 5'-phosphate biosynthesis; pyridoxine 5'-phosphate from D-erythrose 4-phosphate: step 4/5. In terms of biological role, catalyzes the NAD(P)-dependent oxidation of 4-(phosphooxy)-L-threonine (HTP) into 2-amino-3-oxo-4-(phosphooxy)butyric acid which spontaneously decarboxylates to form 3-amino-2-oxopropyl phosphate (AHAP). The chain is 4-hydroxythreonine-4-phosphate dehydrogenase from Rhodopseudomonas palustris (strain ATCC BAA-98 / CGA009).